The chain runs to 255 residues: Proteasome subunit alpha type-3 (255 aa).

At Ser-2 the chain carries N-acetylserine. N6-acetyllysine is present on residues Lys-57, Lys-206, and Lys-230. Phosphoserine occurs at positions 243 and 250.

Belongs to the peptidase T1A family. The 26S proteasome consists of a 20S proteasome core and two 19S regulatory subunits. The 20S proteasome core is a barrel-shaped complex made of 28 subunits that are arranged in four stacked rings. The two outer rings are each formed by seven alpha subunits, and the two inner rings are formed by seven beta subunits. The proteolytic activity is exerted by three beta-subunits PSMB5, PSMB6 and PSMB7. Interacts with AURKB. Interacts with CDKN1A. Interacts with MDM2 and RB1. Interacts with the C-terminus of TBXA2R isoform 2. Interacts with DNAJB2. Detected in liver (at protein level).

The protein resides in the cytoplasm. It is found in the nucleus. Its function is as follows. Component of the 20S core proteasome complex involved in the proteolytic degradation of most intracellular proteins. This complex plays numerous essential roles within the cell by associating with different regulatory particles. Associated with two 19S regulatory particles, forms the 26S proteasome and thus participates in the ATP-dependent degradation of ubiquitinated proteins. The 26S proteasome plays a key role in the maintenance of protein homeostasis by removing misfolded or damaged proteins that could impair cellular functions, and by removing proteins whose functions are no longer required. Associated with the PA200 or PA28, the 20S proteasome mediates ubiquitin-independent protein degradation. This type of proteolysis is required in several pathways including spermatogenesis (20S-PA200 complex) or generation of a subset of MHC class I-presented antigenic peptides (20S-PA28 complex). Binds to the C-terminus of CDKN1A and thereby mediates its degradation. Negatively regulates the membrane trafficking of the cell-surface thromboxane A2 receptor (TBXA2R) isoform 2. In Mus musculus (Mouse), this protein is Proteasome subunit alpha type-3 (Psma3).